Here is a 300-residue protein sequence, read N- to C-terminus: Protoheme IX farnesyltransferase 1 (300 aa).

Helical transmembrane passes span valine 28 to leucine 48, valine 54 to isoleucine 74, alanine 100 to asparagine 120, leucine 122 to leucine 142, asparagine 149 to threonine 169, alanine 176 to isoleucine 196, cysteine 222 to methionine 242, serine 243 to tryptophan 263, and phenylalanine 280 to alanine 300.

This sequence belongs to the UbiA prenyltransferase family. Protoheme IX farnesyltransferase subfamily.

Its subcellular location is the cell inner membrane. It carries out the reaction heme b + (2E,6E)-farnesyl diphosphate + H2O = Fe(II)-heme o + diphosphate. Its pathway is porphyrin-containing compound metabolism; heme O biosynthesis; heme O from protoheme: step 1/1. Its function is as follows. Converts heme B (protoheme IX) to heme O by substitution of the vinyl group on carbon 2 of heme B porphyrin ring with a hydroxyethyl farnesyl side group. The protein is Protoheme IX farnesyltransferase 1 of Shewanella sp. (strain ANA-3).